The following is a 468-amino-acid chain: Nuclear receptor ROR-alpha A (468 aa).

Positions 15–90 form a DNA-binding region, nuclear receptor; it reads IIPCKICGDK…VGMSRDAVKF (76 aa). NR C4-type zinc fingers lie at residues 18 to 38 and 54 to 73; these read CKICGDKSSGIHYGVITCEGC and CPRQKNCLIDRTSRNRCQHC. 2 disordered regions span residues 101 to 129 and 142 to 163; these read LYAEVQKHRLQQQQRDHQQQPGEAEPLTP and HDDLSGYMNGHTPDGTKPDSGV. One can recognise an NR LBD domain in the interval 217–455; that stretch reads ELEHLAQNIS…AHFPPLYKEL (239 aa). Residues 444-455 are AF-2; the sequence is VRAHFPPLYKEL.

It belongs to the nuclear hormone receptor family. NR1 subfamily. As to expression, expressed in the brain, in cerebellar-like structures, including Purkinje cells.

Its subcellular location is the nucleus. In terms of biological role, nuclear receptor that binds DNA as a monomer to ROR response elements (RORE). Required for proper cerebellum development. This Danio rerio (Zebrafish) protein is Nuclear receptor ROR-alpha A (roraa).